Reading from the N-terminus, the 322-residue chain is MSFSDLKLFALSSNKELAERVAQEIGIELGKSSVRQFSDGEIQVNIEESIRGKHVFILQSTSSPVNDNLLEILIMVDALKRASAESVNVVMPYYGYARQDRKARAREPITSKLVANMLEVAGVDRLLTIDLHAAQIQGFFDIPVDHLMGAPLIADYFERRGMVGSDYVVVSPDHGGVTRARKLAEFLKTSIAIIDKRRSVDKMNTSEVMNIIGKVEGKTCILIDDMIDTAGTICHAADALAEAGAVEVYASCTHPVLSGPATDNIQKSAIKKLVVLDTIYLPEERLIDKIEQISIAHLLGDAIVRIHEKRPLSPLFDIEKKI.

ATP-binding positions include 39-41 (DGE) and 98-99 (RQ). Positions 132 and 173 each coordinate Mg(2+). The active site involves K196. Residues R198, D224, and 228–232 (DTAGT) contribute to the D-ribose 5-phosphate site.

This sequence belongs to the ribose-phosphate pyrophosphokinase family. Class I subfamily. As to quaternary structure, homohexamer. Mg(2+) serves as cofactor.

It is found in the cytoplasm. The catalysed reaction is D-ribose 5-phosphate + ATP = 5-phospho-alpha-D-ribose 1-diphosphate + AMP + H(+). It functions in the pathway metabolic intermediate biosynthesis; 5-phospho-alpha-D-ribose 1-diphosphate biosynthesis; 5-phospho-alpha-D-ribose 1-diphosphate from D-ribose 5-phosphate (route I): step 1/1. In terms of biological role, involved in the biosynthesis of the central metabolite phospho-alpha-D-ribosyl-1-pyrophosphate (PRPP) via the transfer of pyrophosphoryl group from ATP to 1-hydroxyl of ribose-5-phosphate (Rib-5-P). This chain is Ribose-phosphate pyrophosphokinase 1, found in Streptococcus pneumoniae serotype 4 (strain ATCC BAA-334 / TIGR4).